Reading from the N-terminus, the 127-residue chain is Small ribosomal subunit protein bS6 (127 aa).

This sequence belongs to the bacterial ribosomal protein bS6 family.

Binds together with bS18 to 16S ribosomal RNA. The protein is Small ribosomal subunit protein bS6 of Sulfurovum sp. (strain NBC37-1).